An 87-amino-acid chain; its full sequence is Small ribosomal subunit protein uS19 (87 aa).

Belongs to the universal ribosomal protein uS19 family.

Protein S19 forms a complex with S13 that binds strongly to the 16S ribosomal RNA. The protein is Small ribosomal subunit protein uS19 (rpsS) of Mycoplasma genitalium (strain ATCC 33530 / DSM 19775 / NCTC 10195 / G37) (Mycoplasmoides genitalium).